A 287-amino-acid polypeptide reads, in one-letter code: Agamous-like MADS-box protein AGL53 (287 aa).

An MADS-box domain is found at 30–78 (STAKKTTNLSMREQTMFKKALELSTLCNIDVCVIYYGRDGKLIKTWPED). The interval 151-171 (EFGQTRAVSSTTNPLSPPPSL) is disordered.

Interacts with MEE14/CBP1.

Its subcellular location is the nucleus. Functionally, probable transcription factor that may function in the maintenance of the proper function of the central cell in pollen tube attraction. The protein is Agamous-like MADS-box protein AGL53 of Arabidopsis thaliana (Mouse-ear cress).